The primary structure comprises 304 residues: Methionyl-tRNA formyltransferase (304 aa).

Residue 107–110 coordinates (6S)-5,6,7,8-tetrahydrofolate; sequence SLLP.

This sequence belongs to the Fmt family.

The enzyme catalyses L-methionyl-tRNA(fMet) + (6R)-10-formyltetrahydrofolate = N-formyl-L-methionyl-tRNA(fMet) + (6S)-5,6,7,8-tetrahydrofolate + H(+). In terms of biological role, attaches a formyl group to the free amino group of methionyl-tRNA(fMet). The formyl group appears to play a dual role in the initiator identity of N-formylmethionyl-tRNA by promoting its recognition by IF2 and preventing the misappropriation of this tRNA by the elongation apparatus. This chain is Methionyl-tRNA formyltransferase, found in Coprothermobacter proteolyticus (strain ATCC 35245 / DSM 5265 / OCM 4 / BT).